The following is a 187-amino-acid chain: Elongation factor P (187 aa).

The protein belongs to the elongation factor P family.

Its subcellular location is the cytoplasm. The protein operates within protein biosynthesis; polypeptide chain elongation. Involved in peptide bond synthesis. Stimulates efficient translation and peptide-bond synthesis on native or reconstituted 70S ribosomes in vitro. Probably functions indirectly by altering the affinity of the ribosome for aminoacyl-tRNA, thus increasing their reactivity as acceptors for peptidyl transferase. In Mycobacterium ulcerans (strain Agy99), this protein is Elongation factor P.